A 155-amino-acid polypeptide reads, in one-letter code: Protein FAM163B (155 aa).

A helical transmembrane segment spans residues 6-26 (VVITGGILATVILLCIIAVLC).

It belongs to the FAM163 family.

Its subcellular location is the membrane. This is Protein FAM163B (fam163b) from Xenopus tropicalis (Western clawed frog).